Reading from the N-terminus, the 193-residue chain is Tetrahydromethanopterin S-methyltransferase subunit A 2 (193 aa).

At 1–38 (MADKKPTAENWPVVSGDYIVGDPESPVAVTTLASHNED) the chain is on the cytoplasmic side. Residues 39–58 (IPAAAGAAIAGPCKTENLGI) form a helical membrane-spanning segment. At 59–193 (EKVVANIISN…SESEKIESEA (135 aa)) the chain is on the extracellular side. Histidine 84 contacts 5-hydroxybenzimidazolylcob(I)amide. The segment at 174 to 193 (SKKSSFVESSSESEKIESEA) is disordered.

It belongs to the MtrA family. The complex is composed of 8 subunits; MtrA, MtrB, MtrC, MtrD, MtrE, MtrF, MtrG and MtrH. Requires 5-hydroxybenzimidazolylcob(I)amide as cofactor.

The protein resides in the cell membrane. It catalyses the reaction 5-methyl-5,6,7,8-tetrahydromethanopterin + coenzyme M + 2 Na(+)(in) = 5,6,7,8-tetrahydromethanopterin + methyl-coenzyme M + 2 Na(+)(out). The protein operates within one-carbon metabolism; methanogenesis from CO(2); methyl-coenzyme M from 5,10-methylene-5,6,7,8-tetrahydromethanopterin: step 2/2. Functionally, part of a complex that catalyzes the formation of methyl-coenzyme M and tetrahydromethanopterin from coenzyme M and methyl-tetrahydromethanopterin. This is an energy-conserving, sodium-ion translocating step. This chain is Tetrahydromethanopterin S-methyltransferase subunit A 2, found in Methanobrevibacter ruminantium (strain ATCC 35063 / DSM 1093 / JCM 13430 / OCM 146 / M1) (Methanobacterium ruminantium).